A 602-amino-acid polypeptide reads, in one-letter code: Sodium- and chloride-dependent GABA transporter 2 (602 aa).

Residues 1–13 (MDSRVSGTTSNGE) are compositionally biased toward polar residues. The disordered stretch occupies residues 1–22 (MDSRVSGTTSNGETKPVYPVME). Over 1 to 40 (MDSRVSGTTSNGETKPVYPVMEKKEEDGTLERGHWNNKME) the chain is Cytoplasmic. 3 consecutive transmembrane segments (helical) span residues 41–61 (FVLS…FPYL), 68–88 (GAFF…VFLL), and 121–141 (IVIL…FYLF). At 142–206 (SSFTIDLPWG…GIQHLGALRW (65 aa)) the chain is on the extracellular side. An intrachain disulfide couples Cys153 to Cys162. Asn173 carries N-linked (GlcNAc...) asparagine glycosylation. 2 consecutive transmembrane segments (helical) span residues 207-227 (ELAL…WKGV) and 233-253 (VVYF…IRGV). Asn269 is a glycosylation site (N-linked (GlcNAc...) asparagine). 7 helical membrane-spanning segments follow: residues 282–302 (AGTQ…ALGS), 319–339 (FLNS…LGFM), 366–386 (VVML…VVLL), 418–438 (VLIL…LTEG), 453–473 (GMCL…VYGA), 490–510 (PLIK…TFLF), and 528–548 (WWGD…IPAW). The Cytoplasmic segment spans residues 549-602 (SLYRLGTLKGPFRERIRQLMCPAEDLPQRNPAGPSAPATPRTSLLRLTELESHC). Residue Thr587 is modified to Phosphothreonine. Ser591 carries the phosphoserine modification.

The protein belongs to the sodium:neurotransmitter symporter (SNF) (TC 2.A.22) family. SLC6A13 subfamily. As to expression, expressed in brain, kidney, lung, liver and testis.

Its subcellular location is the cell membrane. The protein resides in the basolateral cell membrane. It carries out the reaction 4-aminobutanoate(out) + chloride(out) + 2 Na(+)(out) = 4-aminobutanoate(in) + chloride(in) + 2 Na(+)(in). The catalysed reaction is taurine(out) + chloride(out) + 2 Na(+)(out) = taurine(in) + chloride(in) + 2 Na(+)(in). The enzyme catalyses beta-alanine(out) + chloride(out) + 2 Na(+)(out) = beta-alanine(in) + chloride(in) + 2 Na(+)(in). It catalyses the reaction hypotaurine(out) + chloride(out) + 2 Na(+)(out) = hypotaurine(in) + chloride(in) + 2 Na(+)(in). With respect to regulation, GABA transport is inhibited by beta-alanine, 2,3-diaminopropionic acid and SNAP-5114. Its function is as follows. Mediates sodium- and chloride-dependent transport of gamma-aminobutyric acid (GABA). Mediates transport of beta-alanine. Can also mediate transport of taurine and hypotaurine. The polypeptide is Sodium- and chloride-dependent GABA transporter 2 (SLC6A13) (Homo sapiens (Human)).